A 230-amino-acid polypeptide reads, in one-letter code: Cytidylate kinase (230 aa).

12–20 lines the ATP pocket; sequence GPSGAGKGT.

Belongs to the cytidylate kinase family. Type 1 subfamily.

It is found in the cytoplasm. The catalysed reaction is CMP + ATP = CDP + ADP. The enzyme catalyses dCMP + ATP = dCDP + ADP. This chain is Cytidylate kinase, found in Shewanella sediminis (strain HAW-EB3).